The primary structure comprises 104 residues: Small ribosomal subunit protein bS18c (104 aa).

It belongs to the bacterial ribosomal protein bS18 family. As to quaternary structure, part of the 30S ribosomal subunit.

It is found in the plastid. The protein localises to the chloroplast. The sequence is that of Small ribosomal subunit protein bS18c from Lotus japonicus (Lotus corniculatus var. japonicus).